The sequence spans 97 residues: Aspartyl/glutamyl-tRNA(Asn/Gln) amidotransferase subunit C (97 aa).

Belongs to the GatC family. As to quaternary structure, heterotrimer of A, B and C subunits.

The catalysed reaction is L-glutamyl-tRNA(Gln) + L-glutamine + ATP + H2O = L-glutaminyl-tRNA(Gln) + L-glutamate + ADP + phosphate + H(+). The enzyme catalyses L-aspartyl-tRNA(Asn) + L-glutamine + ATP + H2O = L-asparaginyl-tRNA(Asn) + L-glutamate + ADP + phosphate + 2 H(+). In terms of biological role, allows the formation of correctly charged Asn-tRNA(Asn) or Gln-tRNA(Gln) through the transamidation of misacylated Asp-tRNA(Asn) or Glu-tRNA(Gln) in organisms which lack either or both of asparaginyl-tRNA or glutaminyl-tRNA synthetases. The reaction takes place in the presence of glutamine and ATP through an activated phospho-Asp-tRNA(Asn) or phospho-Glu-tRNA(Gln). The protein is Aspartyl/glutamyl-tRNA(Asn/Gln) amidotransferase subunit C of Synechococcus sp. (strain CC9902).